We begin with the raw amino-acid sequence, 305 residues long: Cytochrome c biogenesis protein CcsA (305 aa).

8 helical membrane passes run 13–33 (IYFS…VYPV), 42–62 (KGII…WFYS), 70–90 (LYES…FIDI), 97–117 (WIGV…TLIL), 135–155 (WLIM…CGSL), 212–232 (YTIV…AVWA), 242–262 (WDPK…YIHI), and 276–296 (VASL…ILGI).

This sequence belongs to the CcmF/CycK/Ccl1/NrfE/CcsA family. As to quaternary structure, may interact with Ccs1.

The protein resides in the plastid. The protein localises to the chloroplast thylakoid membrane. Required during biogenesis of c-type cytochromes (cytochrome c6 and cytochrome f) at the step of heme attachment. The protein is Cytochrome c biogenesis protein CcsA of Welwitschia mirabilis (Tree tumbo).